Here is a 380-residue protein sequence, read N- to C-terminus: Kappa-type opioid receptor (380 aa).

Over 1–57 (MEPPVQIFRGEPGPTCSPSTCLPPNGSGWFPGWAEPDGNGSAGSEDVLLEPAHISPV) the chain is Extracellular. Residues asparagine 25 and asparagine 39 are each glycosylated (N-linked (GlcNAc...) asparagine). A helical transmembrane segment spans residues 58–85 (ILVIITAVYSVVFVVGLVGNSLVMFVII). The Cytoplasmic portion of the chain corresponds to 86-95 (RYTKMKTATN). Residues 96–119 (IYIFNLALADALVTTTMPFQSTVY) form a helical membrane-spanning segment. Over 120–132 (LMNSWPFGDVLCK) the chain is Extracellular. An intrachain disulfide couples cysteine 131 to cysteine 210. A helical transmembrane segment spans residues 133-154 (VVISIDYYNMFTSIFTLTMMSV). The Cytoplasmic portion of the chain corresponds to 155–173 (DRYIAVCHPVKALDFRTPL). Residues 174–196 (KAKIINICIWILSSSVGISAIVL) traverse the membrane as a helical segment. The Extracellular segment spans residues 197–222 (GGTKVREDMEVIECSLQFPDDDYSWW). Residues 223 to 247 (DLFMKVCVFVFAFVIPVLIIIVCYT) form a helical membrane-spanning segment. Residues 248–274 (LMILRLKSVRLLSGSREKDRNLRRITR) are Cytoplasmic-facing. The helical transmembrane segment at 275 to 296 (LVLVVVAVFVVCWTPIHIFILV) threads the bilayer. Residues 297–311 (EALGSTAHSTAALSS) lie on the Extracellular side of the membrane. The helical transmembrane segment at 312 to 333 (YYFCIALGYTNSSLNPILYAFL) threads the bilayer. The Cytoplasmic segment spans residues 334–380 (DENFKRCFRDFCFPIKMRMERQSTSRVRNTVQDPAYVREVDGVNKPV). Cysteine 345 carries S-palmitoyl cysteine lipidation.

This sequence belongs to the G-protein coupled receptor 1 family. In terms of assembly, interacts with NHERF1. Interacts with GABARAPL1.

It is found in the cell membrane. Functionally, G-protein coupled opioid receptor that functions as a receptor for endogenous alpha-neoendorphins and dynorphins, but has low affinity for beta-endorphins. Also functions as a receptor for various synthetic opioids and for the psychoactive diterpene salvinorin A. Ligand binding causes a conformation change that triggers signaling via guanine nucleotide-binding proteins (G proteins) and modulates the activity of down-stream effectors, such as adenylate cyclase. Signaling leads to the inhibition of adenylate cyclase activity. Inhibits neurotransmitter release by reducing calcium ion currents and increasing potassium ion conductance. Plays a role in the perception of pain. Plays a role in mediating reduced physical activity upon treatment with synthetic opioids. Plays a role in the regulation of salivation in response to synthetic opioids. May play a role in arousal and regulation of autonomic and neuroendocrine functions. This is Kappa-type opioid receptor (OPRK1) from Bos taurus (Bovine).